The chain runs to 206 residues: Large ribosomal subunit protein uL4 (206 aa).

It belongs to the universal ribosomal protein uL4 family. Part of the 50S ribosomal subunit.

Functionally, one of the primary rRNA binding proteins, this protein initially binds near the 5'-end of the 23S rRNA. It is important during the early stages of 50S assembly. It makes multiple contacts with different domains of the 23S rRNA in the assembled 50S subunit and ribosome. Its function is as follows. Forms part of the polypeptide exit tunnel. The chain is Large ribosomal subunit protein uL4 from Desulfatibacillum aliphaticivorans.